Consider the following 173-residue polypeptide: Alkyl hydroperoxide reductase AhpD (173 aa).

The active-site Proton donor is the C131. The cysteines at positions 131 and 134 are disulfide-linked. The active-site Cysteine sulfenic acid (-SOH) intermediate is C134.

Belongs to the AhpD family.

The enzyme catalyses N(6)-[(R)-dihydrolipoyl]-L-lysyl-[lipoyl-carrier protein] + a hydroperoxide = N(6)-[(R)-lipoyl]-L-lysyl-[lipoyl-carrier protein] + an alcohol + H2O. In terms of biological role, antioxidant protein with alkyl hydroperoxidase activity. Required for the reduction of the AhpC active site cysteine residues and for the regeneration of the AhpC enzyme activity. This is Alkyl hydroperoxide reductase AhpD from Rhizorhabdus wittichii (strain DSM 6014 / CCUG 31198 / JCM 15750 / NBRC 105917 / EY 4224 / RW1) (Sphingomonas wittichii).